The chain runs to 207 residues: LexA repressor (207 aa).

A DNA-binding region (H-T-H motif) is located at residues 28-48; the sequence is RAEIARRLGFKSPNAAEEHLK. Catalysis depends on for autocatalytic cleavage activity residues Ser-126 and Lys-163.

This sequence belongs to the peptidase S24 family. Homodimer.

It catalyses the reaction Hydrolysis of Ala-|-Gly bond in repressor LexA.. Its function is as follows. Represses a number of genes involved in the response to DNA damage (SOS response), including recA and lexA. In the presence of single-stranded DNA, RecA interacts with LexA causing an autocatalytic cleavage which disrupts the DNA-binding part of LexA, leading to derepression of the SOS regulon and eventually DNA repair. This chain is LexA repressor, found in Marinomonas sp. (strain MWYL1).